The following is a 124-amino-acid chain: Small ribosomal subunit protein uS12c (124 aa).

It belongs to the universal ribosomal protein uS12 family. In terms of assembly, part of the 30S ribosomal subunit.

Its subcellular location is the plastid. The protein localises to the chloroplast. Its function is as follows. With S4 and S5 plays an important role in translational accuracy. Located at the interface of the 30S and 50S subunits. The chain is Small ribosomal subunit protein uS12c (rps12) from Ostreococcus tauri.